The primary structure comprises 70 residues: Cytochrome c oxidase subunit 8B, mitochondrial (70 aa).

The transit peptide at 1-24 (MLSLRPALRLLQAPLRCWAVPKAH) directs the protein to the mitochondrion. Over 25-35 (VSAKPAETPTS) the chain is Mitochondrial matrix. The helical transmembrane segment at 36–59 (PAEQAVGLSFIFITFLGPAGWILS) threads the bilayer. Residues 60–70 (HVENYKKRPRA) are Mitochondrial intermembrane-facing.

The protein belongs to the cytochrome c oxidase VIII family. As to quaternary structure, component of the cytochrome c oxidase (complex IV, CIV), a multisubunit enzyme composed of 14 subunits. The complex is composed of a catalytic core of 3 subunits MT-CO1, MT-CO2 and MT-CO3, encoded in the mitochondrial DNA, and 11 supernumerary subunits COX4I, COX5A, COX5B, COX6A, COX6B, COX6C, COX7A, COX7B, COX7C, COX8 and NDUFA4, which are encoded in the nuclear genome. The complex exists as a monomer or a dimer and forms supercomplexes (SCs) in the inner mitochondrial membrane with NADH-ubiquinone oxidoreductase (complex I, CI) and ubiquinol-cytochrome c oxidoreductase (cytochrome b-c1 complex, complex III, CIII), resulting in different assemblies (supercomplex SCI(1)III(2)IV(1) and megacomplex MCI(2)III(2)IV(2)).

The protein resides in the mitochondrion inner membrane. Its pathway is energy metabolism; oxidative phosphorylation. Component of the cytochrome c oxidase, the last enzyme in the mitochondrial electron transport chain which drives oxidative phosphorylation. The respiratory chain contains 3 multisubunit complexes succinate dehydrogenase (complex II, CII), ubiquinol-cytochrome c oxidoreductase (cytochrome b-c1 complex, complex III, CIII) and cytochrome c oxidase (complex IV, CIV), that cooperate to transfer electrons derived from NADH and succinate to molecular oxygen, creating an electrochemical gradient over the inner membrane that drives transmembrane transport and the ATP synthase. Cytochrome c oxidase is the component of the respiratory chain that catalyzes the reduction of oxygen to water. Electrons originating from reduced cytochrome c in the intermembrane space (IMS) are transferred via the dinuclear copper A center (CU(A)) of subunit 2 and heme A of subunit 1 to the active site in subunit 1, a binuclear center (BNC) formed by heme A3 and copper B (CU(B)). The BNC reduces molecular oxygen to 2 water molecules using 4 electrons from cytochrome c in the IMS and 4 protons from the mitochondrial matrix. The protein is Cytochrome c oxidase subunit 8B, mitochondrial (COX8B) of Ateles belzebuth (White-bellied spider monkey).